Reading from the N-terminus, the 507-residue chain is ATP synthase subunit alpha (507 aa).

170–177 (GDRQTGKT) lines the ATP pocket.

Belongs to the ATPase alpha/beta chains family. As to quaternary structure, F-type ATPases have 2 components, CF(1) - the catalytic core - and CF(0) - the membrane proton channel. CF(1) has five subunits: alpha(3), beta(3), gamma(1), delta(1), epsilon(1). CF(0) has three main subunits: a(1), b(2) and c(9-12). The alpha and beta chains form an alternating ring which encloses part of the gamma chain. CF(1) is attached to CF(0) by a central stalk formed by the gamma and epsilon chains, while a peripheral stalk is formed by the delta and b chains.

The protein resides in the cell inner membrane. The enzyme catalyses ATP + H2O + 4 H(+)(in) = ADP + phosphate + 5 H(+)(out). Functionally, produces ATP from ADP in the presence of a proton gradient across the membrane. The alpha chain is a regulatory subunit. The sequence is that of ATP synthase subunit alpha from Fervidobacterium nodosum (strain ATCC 35602 / DSM 5306 / Rt17-B1).